The following is a 325-amino-acid chain: DDB1- and CUL4-associated factor 7 homolog (325 aa).

4 WD repeats span residues 62–104 (EHPY…RSIK), 115–155 (EFCA…AKTQ), 158–197 (AHDK…HSTI), and 247–287 (FHKS…KPIE).

The protein belongs to the WD repeat DCAF7 family.

This is DDB1- and CUL4-associated factor 7 homolog (wdr68) from Dictyostelium discoideum (Social amoeba).